Consider the following 331-residue polypeptide: Acyl-CoA desaturase 1 (331 aa).

Topologically, residues Met1–Val46 are cytoplasmic. Residues Trp47 to Leu67 form a helical membrane-spanning segment. Substrate is bound at residue Asn49. The Lumenal segment spans residues Pro68–Ser71. The chain crosses the membrane as a helical span at residues Ala72–Gly90. The Cytoplasmic portion of the chain corresponds to Ala91–Phe189. Fe cation-binding residues include His92 and His97. The Histidine box-1 signature appears at His92–His97. 3 residues coordinate substrate: Asn120, Arg127, and Asp128. Residues His129, His132, and His133 each contribute to the Fe cation site. A Histidine box-2 motif is present at residues His129–His133. Substrate is bound at residue Lys161. The helical transmembrane segment at Tyr190–Leu209 threads the bilayer. Topologically, residues Trp210 to Ser213 are lumenal. The chain crosses the membrane as a helical span at residues Leu214–Leu235. Substrate is bound at residue Trp234. Residues Val236–Gly331 are Cytoplasmic-facing. Residues His241, His270, His273, and His274 each coordinate Fe cation. The Histidine box-3 signature appears at His270–His274.

This sequence belongs to the fatty acid desaturase type 1 family. It depends on Fe(2+) as a cofactor. In terms of tissue distribution, expression is highest in liver, followed by brain and intestine, and lowest in spleen. Also expressed in heart, gill and muscle.

The protein resides in the endoplasmic reticulum membrane. The enzyme catalyses octadecanoyl-CoA + 2 Fe(II)-[cytochrome b5] + O2 + 2 H(+) = (9Z)-octadecenoyl-CoA + 2 Fe(III)-[cytochrome b5] + 2 H2O. In terms of biological role, stearoyl-CoA desaturase that utilizes O(2) and electrons from reduced cytochrome b5 to introduce the first double bond into saturated fatty acyl-CoA substrates. Catalyzes the insertion of a cis double bond at the delta-9 position into fatty acyl-CoA substrates including palmitoyl-CoA and stearoyl-CoA. Contributes to the biosynthesis of membrane phospholipids, cholesterol esters and triglycerides. In Tachysurus fulvidraco (Yellow catfish), this protein is Acyl-CoA desaturase 1.